The following is an 860-amino-acid chain: Leucine--tRNA ligase (860 aa).

Positions 42 to 52 (PYPSGRLHMGH) match the 'HIGH' region motif. A 'KMSKS' region motif is present at residues 619–623 (KMSKS). Position 622 (K622) interacts with ATP.

This sequence belongs to the class-I aminoacyl-tRNA synthetase family.

It localises to the cytoplasm. It catalyses the reaction tRNA(Leu) + L-leucine + ATP = L-leucyl-tRNA(Leu) + AMP + diphosphate. This Shigella dysenteriae serotype 1 (strain Sd197) protein is Leucine--tRNA ligase.